An 81-amino-acid polypeptide reads, in one-letter code: Large ribosomal subunit protein bL31 (81 aa).

Positions 16, 18, 38, and 41 each coordinate Zn(2+).

Belongs to the bacterial ribosomal protein bL31 family. Type A subfamily. As to quaternary structure, part of the 50S ribosomal subunit. The cofactor is Zn(2+).

In terms of biological role, binds the 23S rRNA. The chain is Large ribosomal subunit protein bL31 from Mycobacterium sp. (strain JLS).